The sequence spans 200 residues: Imidazoleglycerol-phosphate dehydratase (200 aa).

It belongs to the imidazoleglycerol-phosphate dehydratase family.

Its subcellular location is the cytoplasm. The enzyme catalyses D-erythro-1-(imidazol-4-yl)glycerol 3-phosphate = 3-(imidazol-4-yl)-2-oxopropyl phosphate + H2O. It participates in amino-acid biosynthesis; L-histidine biosynthesis; L-histidine from 5-phospho-alpha-D-ribose 1-diphosphate: step 6/9. This Chlorobium phaeobacteroides (strain BS1) protein is Imidazoleglycerol-phosphate dehydratase.